The primary structure comprises 476 residues: Protein transport protein Sec61 subunit alpha isoform 2 (476 aa).

The Cytoplasmic portion of the chain corresponds to 1–33; sequence MGIKFLEVIKPFCAVLPEIQKPERKIQFREKVL. Residues 34-53 form a helical membrane-spanning segment; it reads WTAITLFIFLVCCQIPLFGI. The Lumenal segment spans residues 54 to 76; sequence MSSDSADPFYWMRVILASNRGTL. The helical transmembrane segment at 77–96 threads the bilayer; it reads MELGISPIVTSGLIMQLLAG. At 97-117 the chain is on the cytoplasmic side; the sequence is AKIIEVGDTPKDRALFNGAQK. A helical membrane pass occupies residues 118–138; sequence LFGMIITIGQAIVYVMTGMYG. Residues 139 to 144 lie on the Lumenal side of the membrane; the sequence is DPAEMG. Residues 145–165 form a helical membrane-spanning segment; that stretch reads AGICLLIIIQLFVAGLIVLLL. Residues 166-172 lie on the Cytoplasmic side of the membrane; sequence DELLQKG. The helical transmembrane segment at 173-193 threads the bilayer; that stretch reads YGLGSGISLFIATNICETIVW. The Lumenal portion of the chain corresponds to 194-240; that stretch reads KAFSPTTINTGRGTEFEGAVIALFHLLATRTDKVRALREAFYRQNLP. A helical membrane pass occupies residues 241–261; that stretch reads NLMNLIATVFVFAVVIYFQGF. At 262–288 the chain is on the cytoplasmic side; that stretch reads RVDLPIKSARYRGQYSSYPIKLFYTSN. A helical transmembrane segment spans residues 289–309; that stretch reads IPIILQSALVSNLYVISQMLS. Residues 310 to 354 lie on the Lumenal side of the membrane; it reads VRFSGNFLVNLLGQWADVSGGGPARSYPVGGLCYYLSPPESMGAI. The helical transmembrane segment at 355 to 375 threads the bilayer; that stretch reads FEDPVHVVVYIIFMLGSCAFF. Residues 376–420 lie on the Cytoplasmic side of the membrane; the sequence is SKTWIEVSGSSAKDVAKQLKEQQMVMRGHRDTSMVHELNRYIPTA. Residues 421–441 traverse the membrane as a helical segment; that stretch reads AAFGGLCIGALSVLADFLGAI. The Lumenal segment spans residues 442-445; it reads GSGT. A helical transmembrane segment spans residues 446 to 462; the sequence is GILLAVTIIYQYFEIFV. The Cytoplasmic segment spans residues 463–476; that stretch reads KEQAEVGGMGALFF.

Belongs to the SecY/SEC61-alpha family. As to quaternary structure, the SEC61 channel-forming translocon complex consists of channel-forming core components SEC61A1, SEC61B and SEC61G and different auxiliary components such as SEC62 and SEC63.

It localises to the endoplasmic reticulum membrane. Functionally, component of SEC61 channel-forming translocon complex that mediates transport of signal peptide-containing precursor polypeptides across the endoplasmic reticulum (ER). Forms a ribosome receptor and a gated pore in the ER membrane, both functions required for cotranslational translocation of nascent polypeptides. The protein is Protein transport protein Sec61 subunit alpha isoform 2 (SEC61A2) of Homo sapiens (Human).